The chain runs to 494 residues: MVLGTSSGAGKTLIATAICRCLRRKGEQPIPFKGQNMSNNAWVDTQGREMAYSQALQSWSAGLEPSAEMNPVLLKPKGDCTSEVIHLGKSVGTSKAINYYEDWFDSGWEAIKKGLAILLKSKIDGRLILEGAGSPVEVNLQHKDLTNLKLAKFLNANCILVADIERGGVFAQIIGTIALMKPDEKKLIKGIIINRFRGDKALFESGVTWIEKETGIPVLGILPWLKEIFPPEDSLDLLERKQVNKSAEIEIAIIKLPRISNFSDLDPFFSDSSIQMRWIEPGQDLGNPDVLIIPGSKQTIKDLESLNKTGLSNQIKNYAKKGGNIFGICGGLQMLGKTLEDPHKQESIKEQNTFSNMGMNLLPIKTTFGEIKHTSQREEKVSWPVSQSLKGFEMHYGESDLINNTDSEIISLFKNSSLGWVIEKKDKSFVGGTYLHGIFENDEWRRQWINKIRQKKGLNHLKIDKENNNDKRERLLDLLTDAFEKNINIDILIK.

Positions 248–444 constitute a GATase cobBQ-type domain; sequence EIEIAIIKLP…LHGIFENDEW (197 aa). Cysteine 329 acts as the Nucleophile in catalysis. Histidine 436 is an active-site residue.

Belongs to the CobB/CobQ family. CobQ subfamily.

It participates in cofactor biosynthesis; adenosylcobalamin biosynthesis. In terms of biological role, catalyzes amidations at positions B, D, E, and G on adenosylcobyrinic A,C-diamide. NH(2) groups are provided by glutamine, and one molecule of ATP is hydrogenolyzed for each amidation. The protein is Cobyric acid synthase of Prochlorococcus marinus (strain NATL1A).